A 164-amino-acid polypeptide reads, in one-letter code: Ferredoxin-type protein NapF (164 aa).

4Fe-4S ferredoxin-type domains are found at residues 28–57 (GDESHFLTHCTRCDACINACENNILQRGAG), 58–89 (GYPSVNFKNNECSFCYACAQACPESLFSPRHT), and 132–161 (YQPQLNSQLCNGCGACAASCPVSAITAEYL). The [4Fe-4S] cluster site is built by C37, C40, C43, C47, C69, C72, C75, C79, C141, C144, C147, and C151.

The protein belongs to the NapF family. As to quaternary structure, interacts with the cytoplasmic NapA precursor. [4Fe-4S] cluster serves as cofactor.

The protein resides in the cytoplasm. In terms of biological role, could be involved in the maturation of NapA, the catalytic subunit of the periplasmic nitrate reductase, before its export into the periplasm. This Escherichia coli O157:H7 protein is Ferredoxin-type protein NapF.